The sequence spans 63 residues: Large ribosomal subunit protein uL29 (63 aa).

This sequence belongs to the universal ribosomal protein uL29 family.

The protein is Large ribosomal subunit protein uL29 of Sodalis glossinidius (strain morsitans).